The following is a 478-amino-acid chain: ATP-dependent RNA helicase DDX19A (478 aa).

At alanine 2 the chain carries N-acetylalanine. The interval 2-299 (ATDSWALAVD…DPNIIKLKRE (298 aa)) is N-terminal lobe. A Glycyl lysine isopeptide (Lys-Gly) (interchain with G-Cter in SUMO1); alternate cross-link involves residue lysine 26. A Glycyl lysine isopeptide (Lys-Gly) (interchain with G-Cter in SUMO2); alternate cross-link involves residue lysine 26. Residues 31–55 (KPDTNGVIKTNATPEKTDEEEKEDR) are disordered. Positions 54–67 (DRAAQSLLNKLIRS) are N-terminal helix. The short motif at 91–119 (KSFEELRLKPQLLQGVYAMGFNRPSKIQE) is the Q motif element. ATP contacts are provided by residues glutamine 118 and 137–144 (SQSGTGKT). In terms of domain architecture, Helicase ATP-binding spans 124–294 (MMLAEPPQNL…QKVVPDPNII (171 aa)). The DEAD box motif lies at 241-244 (DEAD). The C-terminal lobe stretch occupies residues 300-478 (EETLDTIKQY…DLDEIEKIAN (179 aa)). In terms of domain architecture, Helicase C-terminal spans 305-473 (TIKQYYVLCN…RLDTDDLDEI (169 aa)). Residues arginine 428 and arginine 431 each contribute to the ATP site.

Belongs to the DEAD box helicase family. DDX19/DBP5 subfamily.

It localises to the cytoplasm. The protein localises to the nucleus. It is found in the nucleoplasm. The enzyme catalyses ATP + H2O = ADP + phosphate + H(+). Its function is as follows. ATP-dependent RNA helicase involved in mRNA export from the nucleus. Rather than unwinding RNA duplexes, DDX19 functions as a remodeler of ribonucleoprotein particles, whereby proteins bound to nuclear mRNA are dissociated and replaced by cytoplasmic mRNA binding proteins. The polypeptide is ATP-dependent RNA helicase DDX19A (DDX19A) (Bos taurus (Bovine)).